Reading from the N-terminus, the 306-residue chain is UDP-3-O-acyl-N-acetylglucosamine deacetylase (306 aa).

Histidine 79, histidine 238, and aspartate 242 together coordinate Zn(2+). Histidine 265 functions as the Proton donor in the catalytic mechanism.

The protein belongs to the LpxC family. Requires Zn(2+) as cofactor.

It catalyses the reaction a UDP-3-O-[(3R)-3-hydroxyacyl]-N-acetyl-alpha-D-glucosamine + H2O = a UDP-3-O-[(3R)-3-hydroxyacyl]-alpha-D-glucosamine + acetate. The protein operates within glycolipid biosynthesis; lipid IV(A) biosynthesis; lipid IV(A) from (3R)-3-hydroxytetradecanoyl-[acyl-carrier-protein] and UDP-N-acetyl-alpha-D-glucosamine: step 2/6. Catalyzes the hydrolysis of UDP-3-O-myristoyl-N-acetylglucosamine to form UDP-3-O-myristoylglucosamine and acetate, the committed step in lipid A biosynthesis. The polypeptide is UDP-3-O-acyl-N-acetylglucosamine deacetylase (Shewanella oneidensis (strain ATCC 700550 / JCM 31522 / CIP 106686 / LMG 19005 / NCIMB 14063 / MR-1)).